A 457-amino-acid chain; its full sequence is F-box/LRR-repeat protein At3g62440 (457 aa).

The F-box domain occupies 1–49 (MDRISNLPDEIICHIGSFLSAREAAFTTVLSKRWHNLFTIVPDLHFDSS). LRR repeat units follow at residues 53–79 (GESLTDFVDRVMALPASSRVNKLSLKW), 147–174 (LSLGSGFAIDFLPENALLPALKTLSLYH), 177–202 (FYEFGRCAFKTLLASSPVLEELTVCG), 229–254 (WDAFDDSDFKSISFDTPSLAYLYYSD), 283–310 (WGKGDEKRFNPINLLHGLKNVETLNLYT), and 337–362 (LSNFCWSSMPMLIKKAPNLKTLNIDG).

This is F-box/LRR-repeat protein At3g62440 from Arabidopsis thaliana (Mouse-ear cress).